The sequence spans 28 residues: Kalata-B12 (28 aa).

Residues glycine 1–aspartate 28 constitute a cross-link (cyclopeptide (Gly-Asp)). Cystine bridges form between cysteine 4-cysteine 18, cysteine 8-cysteine 20, and cysteine 13-cysteine 25.

This is a cyclic peptide.

Its function is as follows. Probably participates in a plant defense mechanism. The chain is Kalata-B12 from Oldenlandia affinis.